The following is a 70-amino-acid chain: Small ribosomal subunit protein bS21 (70 aa).

It belongs to the bacterial ribosomal protein bS21 family.

The polypeptide is Small ribosomal subunit protein bS21 (Chromobacterium violaceum (strain ATCC 12472 / DSM 30191 / JCM 1249 / CCUG 213 / NBRC 12614 / NCIMB 9131 / NCTC 9757 / MK)).